A 70-amino-acid chain; its full sequence is Protein FlmC homolog (70 aa).

The tract at residues 1-21 (MSSPHQDSLLPRFAQGEEGHE) is disordered.

This Escherichia coli protein is Protein FlmC homolog.